The following is a 1077-amino-acid chain: ATP-dependent helicase/deoxyribonuclease subunit B (1077 aa).

This sequence belongs to the helicase family. AddB/RexB type 2 subfamily. In terms of assembly, heterodimer of AddA and RexB. Mg(2+) serves as cofactor.

The heterodimer acts as both an ATP-dependent DNA helicase and an ATP-dependent, dual-direction single-stranded exonuclease. Recognizes the chi site generating a DNA molecule suitable for the initiation of homologous recombination. This subunit has 5' -&gt; 3' nuclease activity but not helicase activity. This is ATP-dependent helicase/deoxyribonuclease subunit B from Streptococcus agalactiae serotype III (strain NEM316).